Here is a 264-residue protein sequence, read N- to C-terminus: Hemin import ATP-binding protein HmuV (264 aa).

Residues 2 to 242 enclose the ABC transporter domain; that stretch reads IEAVNICVQR…QNLSDAYHCS (241 aa). 34–41 is a binding site for ATP; it reads GPNGSGKS.

Belongs to the ABC transporter superfamily. Heme (hemin) importer (TC 3.A.1.14.5) family. In terms of assembly, the complex is composed of two ATP-binding proteins (HmuV), two transmembrane proteins (HmuU) and a solute-binding protein (HmuT).

It localises to the cell inner membrane. Its function is as follows. Part of the ABC transporter complex HmuTUV involved in hemin import. Responsible for energy coupling to the transport system. This chain is Hemin import ATP-binding protein HmuV, found in Bartonella quintana (strain Toulouse) (Rochalimaea quintana).